The sequence spans 359 residues: Peptide chain release factor 1 (359 aa).

The residue at position 235 (Q235) is an N5-methylglutamine. Residues 287-312 (AQEASAMRSAQVGSGDRSERIRTYNF) are disordered.

This sequence belongs to the prokaryotic/mitochondrial release factor family. Post-translationally, methylated by PrmC. Methylation increases the termination efficiency of RF1.

The protein localises to the cytoplasm. Peptide chain release factor 1 directs the termination of translation in response to the peptide chain termination codons UAG and UAA. This chain is Peptide chain release factor 1, found in Chlamydia trachomatis serovar L2 (strain ATCC VR-902B / DSM 19102 / 434/Bu).